A 428-amino-acid chain; its full sequence is GTPase HflX (428 aa).

Residues proline 214–threonine 374 form the Hflx-type G domain. Residues glycine 220–serine 227, phenylalanine 245–aspartate 249, aspartate 267–glycine 270, asparagine 333–aspartate 336, and serine 352–lysine 354 contribute to the GTP site. Serine 227 and threonine 247 together coordinate Mg(2+).

The protein belongs to the TRAFAC class OBG-HflX-like GTPase superfamily. HflX GTPase family. As to quaternary structure, monomer. Associates with the 50S ribosomal subunit. Mg(2+) serves as cofactor.

Its subcellular location is the cytoplasm. In terms of biological role, GTPase that associates with the 50S ribosomal subunit and may have a role during protein synthesis or ribosome biogenesis. This is GTPase HflX from Caldanaerobacter subterraneus subsp. tengcongensis (strain DSM 15242 / JCM 11007 / NBRC 100824 / MB4) (Thermoanaerobacter tengcongensis).